Reading from the N-terminus, the 142-residue chain is Prefoldin subunit alpha (142 aa).

Belongs to the prefoldin subunit alpha family. Heterohexamer of two alpha and four beta subunits.

It localises to the cytoplasm. Its function is as follows. Molecular chaperone capable of stabilizing a range of proteins. Seems to fulfill an ATP-independent, HSP70-like function in archaeal de novo protein folding. This is Prefoldin subunit alpha from Methanosarcina acetivorans (strain ATCC 35395 / DSM 2834 / JCM 12185 / C2A).